Reading from the N-terminus, the 469-residue chain is 24-hydroxycholesterol 7-alpha-hydroxylase (469 aa).

The signal sequence occupies residues 1 to 23 (MELISPTVIIILGCLALFLLLQR). 3 consecutive transmembrane segments (helical) span residues 267–287 (GLLL…WTLA), 352–372 (VEIL…PFWL), and 412–432 (FQCP…ILIL). C414 lines the heme pocket.

Belongs to the cytochrome P450 family. Requires heme as cofactor. Liver specific.

The protein localises to the endoplasmic reticulum membrane. It localises to the microsome membrane. It catalyses the reaction (24S)-hydroxycholesterol + reduced [NADPH--hemoprotein reductase] + O2 = (24S)-7alpha-dihydroxycholesterol + oxidized [NADPH--hemoprotein reductase] + H2O + H(+). It functions in the pathway steroid metabolism; cholesterol degradation. Its pathway is lipid metabolism; bile acid biosynthesis. A cytochrome P450 monooxygenase involved in neural cholesterol clearance through bile acid synthesis. Catalyzes 7-alpha hydroxylation of (24S)-hydroxycholesterol, a neural oxysterol that is metabolized to bile acids in the liver. Mechanistically, uses molecular oxygen inserting one oxygen atom into a substrate, and reducing the second into a water molecule, with two electrons provided by NADPH via cytochrome P450 reductase (CPR; NADPH-ferrihemoprotein reductase). In Homo sapiens (Human), this protein is 24-hydroxycholesterol 7-alpha-hydroxylase.